The chain runs to 55 residues: Riparin-1.4 (55 aa).

The signal sequence occupies residues 1–15 (MKIIVVLAVLMLVSA). Positions 16-41 (QVCLVSAAEMGHSSDNELSSRDLVKR) are excised as a propeptide. Cysteine 47 and cysteine 53 form a disulfide bridge. Residues 54–55 (NH) constitute a propeptide that is removed on maturation.

In terms of tissue distribution, expressed by the skin glands.

Its subcellular location is the secreted. This is Riparin-1.4 from Crinia riparia (Streambank froglet).